The sequence spans 265 residues: Aliphatic sulfonates import ATP-binding protein SsuB 1 (265 aa).

One can recognise an ABC transporter domain in the interval 31-255 (FAFKGVEKRF…RRGSAELARL (225 aa)). 63-70 (GKSGCGKS) lines the ATP pocket.

This sequence belongs to the ABC transporter superfamily. Aliphatic sulfonates importer (TC 3.A.1.17.2) family. In terms of assembly, the complex is composed of two ATP-binding proteins (SsuB), two transmembrane proteins (SsuC) and a solute-binding protein (SsuA).

It is found in the cell inner membrane. It carries out the reaction ATP + H2O + aliphatic sulfonate-[sulfonate-binding protein]Side 1 = ADP + phosphate + aliphatic sulfonateSide 2 + [sulfonate-binding protein]Side 1.. In terms of biological role, part of the ABC transporter complex SsuABC involved in aliphatic sulfonates import. Responsible for energy coupling to the transport system. The sequence is that of Aliphatic sulfonates import ATP-binding protein SsuB 1 from Mesorhizobium japonicum (strain LMG 29417 / CECT 9101 / MAFF 303099) (Mesorhizobium loti (strain MAFF 303099)).